Consider the following 118-residue polypeptide: Large ribosomal subunit protein bL17 (118 aa).

This sequence belongs to the bacterial ribosomal protein bL17 family. In terms of assembly, part of the 50S ribosomal subunit. Contacts protein L32.

The chain is Large ribosomal subunit protein bL17 from Campylobacter fetus subsp. fetus (strain 82-40).